A 272-amino-acid chain; its full sequence is Protein UL11 (272 aa).

The first 31 residues, 1 to 31 (MLFRYITFHREKVLYLTAACIFGVYISLHDA), serve as a signal peptide directing secretion. The Extracellular portion of the chain corresponds to 32-224 (CIPVVGKIGT…PLQPSPQHQH (193 aa)). 4 N-linked (GlcNAc...) asparagine; by host glycosylation sites follow: N42, N93, N100, and N142. The interval 142-200 (NGTFPTTTTKKPTTTTRTTTTTTQRTTTTRTTTTAKKTTISTTHHKHPSPKKSTTPNSH) is disordered. Residues 147-183 (TTTTKKPTTTTRTTTTTTQRTTTTRTTTTAKKTTIST) show a composition bias toward low complexity. Residues 225–245 (LATHALWVLAVVIVIIIIIIF) traverse the membrane as a helical segment. The Cytoplasmic segment spans residues 246-272 (YFRIPQKLWLLWQHDKHGIVLIPQTDL).

This sequence belongs to the RL11 family. As to quaternary structure, interacts with host PTPRC; this interaction affects T-cell signaling. Glycosylated.

It is found in the host cell membrane. The protein resides in the host endoplasmic reticulum. Plays a role in the modulation of host immune response by modulating T-cell function. Interacts with host PTPRC/CD45 and thereby reduces host TCR signaling and T-cell proliferation. The polypeptide is Protein UL11 (UL11) (Human cytomegalovirus (strain Merlin) (HHV-5)).